The chain runs to 90 residues: uncharacterized protein (90 aa).

This is an uncharacterized protein from Bacillus subtilis (strain 168).